The primary structure comprises 209 residues: Dof zinc finger protein DOF1.6 (209 aa).

Positions 1–17 (MPSEPNQTRPTRVQPST) are enriched in polar residues. Positions 1–29 (MPSEPNQTRPTRVQPSTAAYPPPNLAEPL) are disordered. The span at 20-29 (YPPPNLAEPL) shows a compositional bias: pro residues. A Dof-type zinc finger spans residues 29-83 (LPCPRCNSTTTKFCYYNNYNLAQPRYYCKSCRRYWTQGGTLRDVPVGGGTRRSSS). The Zn(2+) site is built by Cys31, Cys34, Cys56, and Cys59. Residues 70 to 116 (RDVPVGGGTRRSSSKRHRSFSTTATSSSSSSSVITTTTQEPATTEAS) are disordered. Low complexity predominate over residues 89–116 (FSTTATSSSSSSSVITTTTQEPATTEAS).

The protein localises to the nucleus. Transcription factor that binds specifically to a 5'-AA[AG]G-3' consensus core sequence. The polypeptide is Dof zinc finger protein DOF1.6 (DOF1.6) (Arabidopsis thaliana (Mouse-ear cress)).